Reading from the N-terminus, the 1024-residue chain is Beta-galactosidase (1024 aa).

Substrate contacts are provided by N103 and D202. Residue D202 coordinates Na(+). E417, H419, and E462 together coordinate Mg(2+). Substrate-binding positions include E462 and 538 to 541 (EYAH). E462 acts as the Proton donor in catalysis. Catalysis depends on E538, which acts as the Nucleophile. N598 is a binding site for Mg(2+). 2 residues coordinate Na(+): F602 and N605. Substrate is bound by residues N605 and W1000.

Belongs to the glycosyl hydrolase 2 family. As to quaternary structure, homotetramer. It depends on Mg(2+) as a cofactor. Na(+) is required as a cofactor.

It carries out the reaction Hydrolysis of terminal non-reducing beta-D-galactose residues in beta-D-galactosides.. The sequence is that of Beta-galactosidase from Escherichia coli O157:H7.